The sequence spans 296 residues: Phosphoribosylaminoimidazole-succinocarboxamide synthase (296 aa).

This sequence belongs to the SAICAR synthetase family.

The enzyme catalyses 5-amino-1-(5-phospho-D-ribosyl)imidazole-4-carboxylate + L-aspartate + ATP = (2S)-2-[5-amino-1-(5-phospho-beta-D-ribosyl)imidazole-4-carboxamido]succinate + ADP + phosphate + 2 H(+). The protein operates within purine metabolism; IMP biosynthesis via de novo pathway; 5-amino-1-(5-phospho-D-ribosyl)imidazole-4-carboxamide from 5-amino-1-(5-phospho-D-ribosyl)imidazole-4-carboxylate: step 1/2. The polypeptide is Phosphoribosylaminoimidazole-succinocarboxamide synthase (Geobacter sulfurreducens (strain ATCC 51573 / DSM 12127 / PCA)).